Consider the following 610-residue polypeptide: Dapper homolog 3 (610 aa).

Residue Ser6 is modified to Phosphoserine. Disordered stretches follow at residues 50 to 76 (PGMG…RRAA), 102 to 179 (LESG…SVGA), and 200 to 579 (TCSS…PAGP). Over residues 56–69 (EAEDEEDAEEDEDA) the composition is skewed to acidic residues. Positions 63-87 (AEEDEDAAAARRAAAALEEQLEALP) form a coiled coil. Residues 120-138 (DPSSTGGPDSPPSTFCGDS) are compositionally biased toward low complexity. Ser165 and Ser237 each carry phosphoserine. The residue at position 255 (Arg255) is an Omega-N-methylarginine. Over residues 317–331 (PPEPAPPAAASPPSS) the composition is skewed to pro residues. Positions 344–356 (PGAPAASRGLPGR) are enriched in low complexity. Residues Ser409 and Ser456 each carry the phosphoserine modification. Residues 475-485 (PRGPAPSPSAP) are compositionally biased toward pro residues. Low complexity predominate over residues 524 to 545 (ESESSASEGESPAFSSASSDSD). The span at 566-576 (GPGGAAGGGTP) shows a compositional bias: gly residues. The PDZ-binding signature appears at 607 to 610 (MTTV).

This sequence belongs to the dapper family. As to quaternary structure, can form homodimers and heterodimers with DACT1 or DACT3. Interacts with CSNK1D, PKA catalytic subunit, PKC-type kinase, DVL1, DVL2, DVL3, VANGL1, VANGL2 and CTNND1. As to expression, expressed in brain and uterus.

In terms of biological role, may be involved in regulation of intracellular signaling pathways during development. Specifically thought to play a role in canonical and/or non-canonical Wnt signaling pathways through interaction with DSH (Dishevelled) family proteins. The polypeptide is Dapper homolog 3 (Dact3) (Mus musculus (Mouse)).